A 308-amino-acid chain; its full sequence is Olfactory receptor 6F1 (308 aa).

Residues 1–25 (MDTGNKTLPQDFLLLGFPGSQTLQL) are Extracellular-facing. Asn5 carries an N-linked (GlcNAc...) asparagine glycan. The chain crosses the membrane as a helical span at residues 26–46 (SLFMLFLVMYILTVSGNVAIL). Residues 47–54 (MLVSTSHQ) are Cytoplasmic-facing. A helical transmembrane segment spans residues 55 to 75 (LHTPMYFFLSNLSFLEIWYTT). Residues 76–99 (AAVPKALAILLGRSQTISFTSCLL) lie on the Extracellular side of the membrane. A disulfide bond links Cys97 and Cys189. A helical membrane pass occupies residues 100–120 (QMYFVFSLGCTEYFLLAAMAY). Residues 121 to 139 (DRCLAICYPLHYGAIMSSL) are Cytoplasmic-facing. A helical transmembrane segment spans residues 140–160 (LSAQLALGSWVCGFVAIAVPT). Residues 161 to 197 (ALISGLSFCGPRAINHFFCDIAPWIALACTNTQAVEL) are Extracellular-facing. A helical transmembrane segment spans residues 198-217 (VAFVIAVVVILSSCLITFVS). Over 218 to 237 (YVYIISTILRIPSASGRSKA) the chain is Cytoplasmic. The chain crosses the membrane as a helical span at residues 238–258 (FSTCSSHLTVVLIWYGSTVFL). At 259–271 (HVRTSIKDALDLI) the chain is on the extracellular side. The helical transmembrane segment at 272 to 292 (KAVHVLNTVVTPVLNPFIYTL) threads the bilayer. Residues 293–308 (RNKEVRETLLKKWKGK) lie on the Cytoplasmic side of the membrane.

Belongs to the G-protein coupled receptor 1 family.

The protein localises to the cell membrane. Odorant receptor. In Homo sapiens (Human), this protein is Olfactory receptor 6F1 (OR6F1).